A 150-amino-acid chain; its full sequence is Lipoprotein signal peptidase (150 aa).

The next 3 membrane-spanning stretches (helical) occupy residues 5-25, 59-79, and 83-103; these read LSLV…NWIV, QQWF…WFLW, and AQNW…GNFI. Catalysis depends on residues D113 and D129. A helical transmembrane segment spans residues 124 to 144; the sequence is IFNIADILLSVGFVLLFIAIL.

The protein belongs to the peptidase A8 family.

The protein localises to the cell membrane. It catalyses the reaction Release of signal peptides from bacterial membrane prolipoproteins. Hydrolyzes -Xaa-Yaa-Zaa-|-(S,diacylglyceryl)Cys-, in which Xaa is hydrophobic (preferably Leu), and Yaa (Ala or Ser) and Zaa (Gly or Ala) have small, neutral side chains.. It functions in the pathway protein modification; lipoprotein biosynthesis (signal peptide cleavage). This protein specifically catalyzes the removal of signal peptides from prolipoproteins. The polypeptide is Lipoprotein signal peptidase (Lactococcus lactis subsp. lactis (strain IL1403) (Streptococcus lactis)).